The sequence spans 100 residues: UPF0125 protein HD_1828 (100 aa).

This sequence belongs to the UPF0125 (RnfH) family.

The chain is UPF0125 protein HD_1828 from Haemophilus ducreyi (strain 35000HP / ATCC 700724).